The chain runs to 487 residues: UDP-N-acetylmuramoyl-L-alanyl-D-glutamate--2,6-diaminopimelate ligase (487 aa).

Ser30 is a UDP-N-acetyl-alpha-D-muramoyl-L-alanyl-D-glutamate binding site. 109–115 (GTNGKTS) contacts ATP. UDP-N-acetyl-alpha-D-muramoyl-L-alanyl-D-glutamate is bound by residues 151–152 (TT), Ser178, and Arg186. Lys218 is subject to N6-carboxylysine. Meso-2,6-diaminopimelate contacts are provided by residues Arg379, 403–406 (DNPR), Gly455, and Glu459. A Meso-diaminopimelate recognition motif motif is present at residues 403 to 406 (DNPR).

This sequence belongs to the MurCDEF family. MurE subfamily. It depends on Mg(2+) as a cofactor. In terms of processing, carboxylation is probably crucial for Mg(2+) binding and, consequently, for the gamma-phosphate positioning of ATP.

It is found in the cytoplasm. The catalysed reaction is UDP-N-acetyl-alpha-D-muramoyl-L-alanyl-D-glutamate + meso-2,6-diaminopimelate + ATP = UDP-N-acetyl-alpha-D-muramoyl-L-alanyl-gamma-D-glutamyl-meso-2,6-diaminopimelate + ADP + phosphate + H(+). Its pathway is cell wall biogenesis; peptidoglycan biosynthesis. In terms of biological role, catalyzes the addition of meso-diaminopimelic acid to the nucleotide precursor UDP-N-acetylmuramoyl-L-alanyl-D-glutamate (UMAG) in the biosynthesis of bacterial cell-wall peptidoglycan. The protein is UDP-N-acetylmuramoyl-L-alanyl-D-glutamate--2,6-diaminopimelate ligase of Alkaliphilus oremlandii (strain OhILAs) (Clostridium oremlandii (strain OhILAs)).